The primary structure comprises 353 residues: tRNA N(3)-cytidine methyltransferase METTL2 (353 aa).

The interval 1–37 (MAAPVVAADSPVIENMPETAGGATENSAEAQKRPQFG) is disordered. S-adenosyl-L-methionine is bound by residues tryptophan 93, tyrosine 97, glycine 165, aspartate 190, aspartate 216, and isoleucine 237.

The protein belongs to the methyltransferase superfamily. METL family. In terms of assembly, monomer.

The protein localises to the cytoplasm. It catalyses the reaction cytidine(32) in tRNA(Thr) + S-adenosyl-L-methionine = N(3)-methylcytidine(32) in tRNA(Thr) + S-adenosyl-L-homocysteine + H(+). It carries out the reaction cytidine(32) in tRNA(Arg)(CCU) + S-adenosyl-L-methionine = N(3)-methylcytidine(32) in tRNA(Arg)(CCU) + S-adenosyl-L-homocysteine + H(+). In terms of biological role, S-adenosyl-L-methionine-dependent methyltransferase that mediates N(3)-methylcytidine modification of residue 32 of the tRNA anticodon loop of tRNA(Thr)(UGU) and tRNA(Arg)(CCU). N(3)-methylcytidine methylation by mettl2a requires the N6-threonylcarbamoylation of tRNA (t6A37) by the EKC/KEOPS complex as prerequisite. The polypeptide is tRNA N(3)-cytidine methyltransferase METTL2 (mettl2a) (Danio rerio (Zebrafish)).